The sequence spans 211 residues: MKAQKYSKEGKLISEIELPSALFESKLSVASIYEAIKAENANLRSGNHATKTRSMVSGGGKKPWSQKGTGRARQGSTRAPHWVGGGTVHGPQKRDYSYKVSSKLKHRAVLSILGKKAQASAVKVVEDLDPKEYNTKAFDSIFKNMNLKNTGVIGLLVQGENDFLKKSVRNIPTVKYINSKRISCRDILYNRNLVITEAALKEMLVQYGAQK.

Positions 46–55 are enriched in polar residues; sequence GNHATKTRSM. The segment at 46-89 is disordered; it reads GNHATKTRSMVSGGGKKPWSQKGTGRARQGSTRAPHWVGGGTVH.

Belongs to the universal ribosomal protein uL4 family. In terms of assembly, part of the 50S ribosomal subunit.

In terms of biological role, one of the primary rRNA binding proteins, this protein initially binds near the 5'-end of the 23S rRNA. It is important during the early stages of 50S assembly. It makes multiple contacts with different domains of the 23S rRNA in the assembled 50S subunit and ribosome. Forms part of the polypeptide exit tunnel. The chain is Large ribosomal subunit protein uL4 from Leptospira interrogans serogroup Icterohaemorrhagiae serovar copenhageni (strain Fiocruz L1-130).